The primary structure comprises 342 residues: Probable deoxyhypusine synthase (342 aa).

The active-site Nucleophile is the Lys307.

Belongs to the deoxyhypusine synthase family. The cofactor is NAD(+).

It carries out the reaction [eIF5A protein]-L-lysine + spermidine = [eIF5A protein]-deoxyhypusine + propane-1,3-diamine. The protein operates within protein modification; eIF5A hypusination. Its function is as follows. Catalyzes the NAD-dependent oxidative cleavage of spermidine and the subsequent transfer of the butylamine moiety of spermidine to the epsilon-amino group of a specific lysine residue of the eIF-5A precursor protein to form the intermediate deoxyhypusine residue. This chain is Probable deoxyhypusine synthase (dys), found in Pyrococcus horikoshii (strain ATCC 700860 / DSM 12428 / JCM 9974 / NBRC 100139 / OT-3).